Consider the following 88-residue polypeptide: Small ribosomal subunit protein bS16c (88 aa).

As to quaternary structure, component of the chloroplast small ribosomal subunit (SSU). Mature 70S chloroplast ribosomes of higher plants consist of a small (30S) and a large (50S) subunit. The 30S small subunit contains 1 molecule of ribosomal RNA (16S rRNA) and 24 different proteins. The 50S large subunit contains 3 rRNA molecules (23S, 5S and 4.5S rRNA) and 33 different proteins.

It is found in the plastid. It localises to the chloroplast. Component of the chloroplast ribosome (chloro-ribosome), a dedicated translation machinery responsible for the synthesis of chloroplast genome-encoded proteins, including proteins of the transcription and translation machinery and components of the photosynthetic apparatus. This Spinacia oleracea (Spinach) protein is Small ribosomal subunit protein bS16c.